Reading from the N-terminus, the 611-residue chain is DNA-directed RNA polymerase subunit Rpo2C (611 aa).

Positions 547, 550, 565, and 568 each coordinate Zn(2+).

The protein belongs to the RNA polymerase beta chain family. In terms of assembly, part of the RNA polymerase complex. Zn(2+) serves as cofactor.

It localises to the cytoplasm. The enzyme catalyses RNA(n) + a ribonucleoside 5'-triphosphate = RNA(n+1) + diphosphate. In terms of biological role, DNA-dependent RNA polymerase (RNAP) catalyzes the transcription of DNA into RNA using the four ribonucleoside triphosphates as substrates. The Rpo2 subunit (Rpo2N and Rpo2C in this organism) is implicated in DNA promoter recognition and in nucleotide binding. This Methanococcus vannielii (strain ATCC 35089 / DSM 1224 / JCM 13029 / OCM 148 / SB) protein is DNA-directed RNA polymerase subunit Rpo2C.